The primary structure comprises 179 residues: HTH-type transcriptional regulator AldR (179 aa).

One can recognise an HTH asnC-type domain in the interval 32–93; that stretch reads LDEVDRRILS…DIDPVAVGLP (62 aa). A DNA-binding region (H-T-H motif) is located at residues 51–70; that stretch reads NNALADTVGIAPSTCHGRVR.

Homooctamer. Homotetramer. Tetramer of dimers. The N-terminal DNA-binding domains are swapped, forming a dimer, and four dimers are assembled into an octamer through crystal symmetry.

The DNA-binding activity of AldR is modulated by interaction of AldR with various amino acids. Alanine, tryptophan, tyrosine and aspartate completely abolish the DNA binding ability of AldR. On the other hand, glutamate and asparagine reduce AldR binding to DNA but do not completely abolish it. Binding of amino acids can lead to structural modifications and changes in oligomeric association. Activity is also inhibited by 3 small molecule inhibitors, tetrahydroquinoline carbonitrile derivative (S010-0261), levothyroxine and liothyronine, which can disrupt the AldR-DNA complex. Functionally, transcriptional regulator that might play a role under hypoxic conditions. Regulates the expression of ald, which encodes L-alanine dehydrogenase. Serves as both an activator for ald expression in the presence of L-alanine and a repressor in the absence of L-alanine. Acts by binding directly to the upstream region of the ald gene. Four AldR-binding sites (O2, O1, O4 and O3) were identified upstream of the ald gene. O2, O1 and O4 are required for the induction of ald expression by alanine, while O3 is directly involved in the repression of ald expression, by occluding the access of RNA polymerase to the ald promoter. In addition to O3, both O1 and O4 are also necessary for full repression of ald expression in the absence of alanine. This is HTH-type transcriptional regulator AldR from Mycobacterium tuberculosis (strain ATCC 25618 / H37Rv).